A 279-amino-acid chain; its full sequence is 2-dehydro-3-deoxyphosphooctonate aldolase (279 aa).

Belongs to the KdsA family.

Its subcellular location is the cytoplasm. It catalyses the reaction D-arabinose 5-phosphate + phosphoenolpyruvate + H2O = 3-deoxy-alpha-D-manno-2-octulosonate-8-phosphate + phosphate. The protein operates within carbohydrate biosynthesis; 3-deoxy-D-manno-octulosonate biosynthesis; 3-deoxy-D-manno-octulosonate from D-ribulose 5-phosphate: step 2/3. Its pathway is bacterial outer membrane biogenesis; lipopolysaccharide biosynthesis. This chain is 2-dehydro-3-deoxyphosphooctonate aldolase, found in Methylobacillus flagellatus (strain ATCC 51484 / DSM 6875 / VKM B-1610 / KT).